A 279-amino-acid polypeptide reads, in one-letter code: Large ribosomal subunit protein uL2 (279 aa).

Disordered regions lie at residues 30–59 (EKSL…GGHK) and 225–279 (VMNP…KNKR). Residues 50-59 (TTRHKGGGHK) are compositionally biased toward basic residues. Basic and acidic residues predominate over residues 253-268 (PEGRTRRPNKESDKLI). The span at 269–279 (VRRRRTGKNKR) shows a compositional bias: basic residues.

This sequence belongs to the universal ribosomal protein uL2 family. In terms of assembly, part of the 50S ribosomal subunit. Forms a bridge to the 30S subunit in the 70S ribosome.

Functionally, one of the primary rRNA binding proteins. Required for association of the 30S and 50S subunits to form the 70S ribosome, for tRNA binding and peptide bond formation. It has been suggested to have peptidyltransferase activity; this is somewhat controversial. Makes several contacts with the 16S rRNA in the 70S ribosome. This is Large ribosomal subunit protein uL2 from Kocuria rhizophila (strain ATCC 9341 / DSM 348 / NBRC 103217 / DC2201).